A 303-amino-acid chain; its full sequence is Propanal dehydrogenase (CoA-propanoylating) (303 aa).

An NAD(+)-binding site is contributed by 12–15 (SGNI). The active-site Acyl-thioester intermediate is Cys-127. NAD(+)-binding positions include 158–166 (SAGPGTRAN) and Asn-277.

It belongs to the acetaldehyde dehydrogenase family. In terms of assembly, monomer. Forms a heterotetramer composed of two aldolase (HsaF) and two dehydrogenase (HsaG) subunits.

It catalyses the reaction propanal + NAD(+) + CoA = propanoyl-CoA + NADH + H(+). It carries out the reaction acetaldehyde + NAD(+) + CoA = acetyl-CoA + NADH + H(+). Its function is as follows. Involved in cholesterol degradation. Catalyzes the conversion of propanal to propanoyl-CoA, using NAD(+) and coenzyme A. This chain is Propanal dehydrogenase (CoA-propanoylating), found in Mycobacterium bovis (strain ATCC BAA-935 / AF2122/97).